We begin with the raw amino-acid sequence, 114 residues long: Lymphotactin (114 aa).

Residues 1 to 21 (MRLLILALLGICSLTAYIVEG) form the signal peptide. Cysteine 32 and cysteine 69 form a disulfide bridge. A disordered region spans residues 91 to 114 (RNNMIQTKPTGTQQSTNTAVTLTG).

It belongs to the intercrine gamma family. In terms of tissue distribution, highest level in spleen, lower in peripheral leukocytes and very low levels in lung, colon and small intestine.

It localises to the secreted. Chemotactic activity for lymphocytes but not for monocytes or neutrophils. In thymus, mediates medullary accumulation of thymic dendritic cells and contributes to regulatoy T cell development, playing a role in self-tolerance establishment. This Homo sapiens (Human) protein is Lymphotactin (XCL1).